A 261-amino-acid chain; its full sequence is Prostate-specific antigen (261 aa).

A signal peptide spans 1–17 (MWVPVVFLTLSVTWIGA). A propeptide spans 18-24 (APLILSR) (activation peptide). The 234-residue stretch at 25 to 258 (IVGGWECEKH…YRKWIKDTIV (234 aa)) folds into the Peptidase S1 domain. 5 disulfide bridges follow: Cys31/Cys173, Cys50/Cys66, Cys152/Cys219, Cys184/Cys198, and Cys209/Cys234. His65 serves as the catalytic Charge relay system. A glycan (N-linked (GlcNAc...) asparagine) is linked at Asn69. Asp120 (charge relay system) is an active-site residue. The active-site Charge relay system is the Ser213.

This sequence belongs to the peptidase S1 family. Kallikrein subfamily. In terms of assembly, forms a heterodimer with SERPINA5.

It localises to the secreted. The enzyme catalyses Preferential cleavage: -Tyr-|-Xaa-.. With respect to regulation, inhibited by SERPINA5. Activity is strongly inhibited by Zn2+, 100 times more abundant in semen than in serum. This inhibition is relieved by exposure to semenogelins, which are avid zinc binders. In terms of biological role, hydrolyzes semenogelin-1 thus leading to the liquefaction of the seminal coagulum. The polypeptide is Prostate-specific antigen (KLK3) (Homo sapiens (Human)).